We begin with the raw amino-acid sequence, 364 residues long: Ribosomal RNA large subunit methyltransferase M (364 aa).

S-adenosyl-L-methionine-binding positions include Ser-198, 231–234 (APGG), Asp-250, Asp-270, and Asp-286. Lys-315 serves as the catalytic Proton acceptor.

Belongs to the class I-like SAM-binding methyltransferase superfamily. RNA methyltransferase RlmE family. RlmM subfamily. As to quaternary structure, monomer.

The protein localises to the cytoplasm. The catalysed reaction is cytidine(2498) in 23S rRNA + S-adenosyl-L-methionine = 2'-O-methylcytidine(2498) in 23S rRNA + S-adenosyl-L-homocysteine + H(+). In terms of biological role, catalyzes the 2'-O-methylation at nucleotide C2498 in 23S rRNA. In Azoarcus sp. (strain BH72), this protein is Ribosomal RNA large subunit methyltransferase M.